A 61-amino-acid polypeptide reads, in one-letter code: Small ribosomal subunit protein uS14 (61 aa).

Residues 1 to 12 (MSESETTDEPDS) are compositionally biased toward acidic residues. The interval 1-25 (MSESETTDEPDSETASSERTGQLES) is disordered. Zn(2+) is bound by residues Cys-26, Cys-29, Cys-44, and Cys-47.

This sequence belongs to the universal ribosomal protein uS14 family. Zinc-binding uS14 subfamily. Part of the 30S ribosomal subunit. It depends on Zn(2+) as a cofactor.

Its function is as follows. Binds 16S rRNA, required for the assembly of 30S particles. The sequence is that of Small ribosomal subunit protein uS14 from Haloarcula marismortui (strain ATCC 43049 / DSM 3752 / JCM 8966 / VKM B-1809) (Halobacterium marismortui).